The primary structure comprises 101 residues: Ubiquitin-related modifier 1 homolog (101 aa).

Position 101 is a 1-thioglycine (Gly-101). Gly-101 participates in a covalent cross-link: Glycyl lysine isopeptide (Gly-Lys) (interchain with K-? in acceptor proteins).

The protein belongs to the URM1 family. In terms of assembly, interacts with cer. Post-translationally, C-terminal thiocarboxylation occurs in 2 steps, it is first acyl-adenylated (-COAMP) via the hesA/moeB/thiF part of the MOCS3 homolog, then thiocarboxylated (-COSH) via the rhodanese domain of the MOCS3 homolog.

It is found in the cytoplasm. The protein operates within tRNA modification; 5-methoxycarbonylmethyl-2-thiouridine-tRNA biosynthesis. Acts as a sulfur carrier required for 2-thiolation of mcm(5)S(2)U at tRNA wobble positions of cytosolic tRNA(Lys), tRNA(Glu) and tRNA(Gln). Serves as sulfur donor in tRNA 2-thiolation reaction by being thiocarboxylated (-COSH) at its C-terminus by MOCS3. The sulfur is then transferred to tRNA to form 2-thiolation of mcm(5)S(2)U. Also acts as a ubiquitin-like protein (UBL) that is covalently conjugated via an isopeptide bond to lysine residues of target proteins such as Prx2/Jafrac1, Ciao1, Eip71CD and GILT1. The thiocarboxylated form serves as substrate for conjugation and oxidative stress specifically induces the formation of UBL-protein conjugates. This chain is Ubiquitin-related modifier 1 homolog, found in Drosophila yakuba (Fruit fly).